A 260-amino-acid chain; its full sequence is Exosome complex component Rrp42 (260 aa).

Belongs to the RNase PH family. Rrp42 subfamily. As to quaternary structure, component of the archaeal exosome complex. Forms a hexameric ring-like arrangement composed of 3 Rrp41-Rrp42 heterodimers. The hexameric ring associates with a trimer of Rrp4 and/or Csl4 subunits.

Its subcellular location is the cytoplasm. In terms of biological role, non-catalytic component of the exosome, which is a complex involved in RNA degradation. Contributes to the structuring of the Rrp41 active site. The protein is Exosome complex component Rrp42 of Methanocella arvoryzae (strain DSM 22066 / NBRC 105507 / MRE50).